A 1107-amino-acid polypeptide reads, in one-letter code: Enolase-phosphatase E1 (1107 aa).

Residues aspartate 19 and glutamate 21 each contribute to the Mg(2+) site. Substrate contacts are provided by residues 152 to 153 (SS) and lysine 186. Position 211 (aspartate 211) interacts with Mg(2+). A disordered region spans residues 258–1107 (SVKSTETENG…SATPSVETES (850 aa)). The segment covering 260–289 (KSTETENGAEKETVTESTEKVADESEKETE) has biased composition (basic and acidic residues). A compositionally biased stretch (low complexity) spans 291-306 (ETAAAETENGAEAENG). The span at 366–376 (DAMDVDAEMTD) shows a compositional bias: acidic residues. Basic and acidic residues-rich tracts occupy residues 393–427 (VTEK…DTKQ) and 435–462 (GEDK…KEEE). The span at 475–485 (DKMDVDEEDSA) shows a compositional bias: acidic residues. Composition is skewed to basic and acidic residues over residues 486-512 (VIEK…KEEN), 534-548 (DETK…KEES), 572-586 (TVEK…SKSE), 593-604 (TSEKKVEDKSAN), 610-686 (KEPK…EVKA), and 693-776 (DESK…KSVD). Low complexity predominate over residues 794-803 (EETSATTEAQ). Composition is skewed to basic and acidic residues over residues 804-838 (ATKE…DAKS) and 849-908 (KEMK…ETKG). The segment covering 909-919 (VEATTAGPVEE) has biased composition (low complexity). Over residues 920 to 935 (VAVEATEEDVAMEAES) the composition is skewed to acidic residues. Composition is skewed to basic and acidic residues over residues 937–957 (DAVK…KLDS), 1001–1028 (DEVK…EADS), and 1035–1047 (NHDE…KEND). Over residues 1048-1083 (TSASNIEEASSATTTTTNGTSTESDSSSTTPSSETV) the composition is skewed to low complexity.

It belongs to the HAD-like hydrolase superfamily. MasA/MtnC family. Monomer. Requires Mg(2+) as cofactor.

Its subcellular location is the cytoplasm. The protein localises to the nucleus. It catalyses the reaction 5-methylsulfanyl-2,3-dioxopentyl phosphate + H2O = 1,2-dihydroxy-5-(methylsulfanyl)pent-1-en-3-one + phosphate. The protein operates within amino-acid biosynthesis; L-methionine biosynthesis via salvage pathway; L-methionine from S-methyl-5-thio-alpha-D-ribose 1-phosphate: step 3/6. It participates in amino-acid biosynthesis; L-methionine biosynthesis via salvage pathway; L-methionine from S-methyl-5-thio-alpha-D-ribose 1-phosphate: step 4/6. Bifunctional enzyme that catalyzes the enolization of 2,3-diketo-5-methylthiopentyl-1-phosphate (DK-MTP-1-P) into the intermediate 2-hydroxy-3-keto-5-methylthiopentenyl-1-phosphate (HK-MTPenyl-1-P), which is then dephosphorylated to form the acireductone 1,2-dihydroxy-3-keto-5-methylthiopentene (DHK-MTPene). The protein is Enolase-phosphatase E1 of Aedes aegypti (Yellowfever mosquito).